The chain runs to 734 residues: MAPRFPKFSQGLAQDPTTRRIWFGIATAHDFESHDDITEERLYQKIFASHFGQLTVIFLWTSGNLFHVAWQGNFEAWVQDPLHVRPIAHAIWDPHFGQPAVEAYTRGGASGPVNIAYSGVYQWWYTIGLRTNQDLYTGAIFLLALSALFLIAGWLHLQPGWKPGLSWFKNAESRLNHHLSGLFGVSSLAWAGHLVHVAIPESRGEHVRWQNLLTALPHPRGLEPFFSGQWSIYAQNPDSTNHFFGTTQGAGTAILTFLGGFHPQTQSLWLTDIAHHHLAIAVVFIIAGHMYRTNFGIGHSIKEILEAHTPPGGRLGRGHKGLYDTINNSLHFQLGLALAALGVITSLVAQHMYSLPAYAYIAQDFTTQAALYTHHQYIAGFLMTGAFAHGAIFFIRDYNPEQNKDNVLARMLEHKEAIISHLSWASLFLGFHTLGLYVHNDAMLAFGTPEKQILIEPVFAQWIQATHGKALYGFDVLLSSANSPAFNAGQSLWLPGWLDAINNNSNSLFLTIGPGDFLVHHAIALGLHTTTLILVKGALDARGSKLMPDKKEFGYSFPCDGPGRGGTCDISAWDAFYLAVFWMLNTIGWVTFYWHWKHITLWQGNVAQFNESSTYLMGWLRDYLWLNSSQLINGYNPFGMNSLSVWAWMFLFGHLVWAIGFMFLISWRGYWQELIETLAWAHERTPLANLVRWKDKPVALSIVQARLVGLAHFSVGYIFTYAAFLIASTSGKFG.

8 consecutive transmembrane segments (helical) span residues 46–69 (IFAS…FHVA), 135–158 (LYTG…LHLQ), 175–199 (LNHH…HVAI), 273–291 (IAHH…GHMY), 330–353 (LHFQ…QHMY), 369–395 (AALY…IFFI), 417–439 (AIIS…LYVH), and 517–535 (FLVH…LILV). [4Fe-4S] cluster is bound by residues Cys559 and Cys568. The next 2 helical transmembrane spans lie at 575-596 (AFYL…YWHW) and 643-665 (LSVW…MFLI). Chlorophyll a is bound by residues His654, Met662, and Tyr670. Trp671 contacts phylloquinone. Residues 707–727 (LVGLAHFSVGYIFTYAAFLIA) form a helical membrane-spanning segment.

Belongs to the PsaA/PsaB family. As to quaternary structure, the PsaA/B heterodimer binds the P700 chlorophyll special pair and subsequent electron acceptors. PSI consists of a core antenna complex that captures photons, and an electron transfer chain that converts photonic excitation into a charge separation. The eukaryotic PSI reaction center is composed of at least 11 subunits. It depends on P700 is a chlorophyll a/chlorophyll a' dimer, A0 is one or more chlorophyll a, A1 is one or both phylloquinones and FX is a shared 4Fe-4S iron-sulfur center. as a cofactor.

The protein localises to the plastid. Its subcellular location is the chloroplast thylakoid membrane. It carries out the reaction reduced [plastocyanin] + hnu + oxidized [2Fe-2S]-[ferredoxin] = oxidized [plastocyanin] + reduced [2Fe-2S]-[ferredoxin]. Functionally, psaA and PsaB bind P700, the primary electron donor of photosystem I (PSI), as well as the electron acceptors A0, A1 and FX. PSI is a plastocyanin-ferredoxin oxidoreductase, converting photonic excitation into a charge separation, which transfers an electron from the donor P700 chlorophyll pair to the spectroscopically characterized acceptors A0, A1, FX, FA and FB in turn. Oxidized P700 is reduced on the lumenal side of the thylakoid membrane by plastocyanin. This is Photosystem I P700 chlorophyll a apoprotein A2 from Psilotum nudum (Whisk fern).